The chain runs to 345 residues: MDTMRWQDDHLLLLDQTKLPLTEEYIECWDHVILCDAIKKLKVRGAPAIGAAAAFGVALAALNYTGEDRAEFEADVKKAIADLGKTRPTAVNLFWALRRMEAVLEDIRTYSVKEQQERLIAEAKAVFDEDRAMNEQMGQYGLELIPESAGILTHCNAGALATAGFGTALGVIRAAHRAGKEISVFADETRPLLQGARLTAWELMQDGIPVTLITDSMAAYVMKQKLVDLVIVGADRITANGDVANKIGTYGVALAAKAHGIPFYVAAPVSTFDLSLESGLQIPIEERDTEEVRRVGDSITAPPGVPVYNPAFDVTPAELVTAFITDRGVFRPPYLETLRAMAETK.

Residues 44-46 (RGA), Arg-87, and Gln-194 contribute to the substrate site. Asp-235 functions as the Proton donor in the catalytic mechanism. 245–246 (NK) provides a ligand contact to substrate.

The protein belongs to the eIF-2B alpha/beta/delta subunits family. MtnA subfamily.

It carries out the reaction 5-(methylsulfanyl)-alpha-D-ribose 1-phosphate = 5-(methylsulfanyl)-D-ribulose 1-phosphate. The protein operates within amino-acid biosynthesis; L-methionine biosynthesis via salvage pathway; L-methionine from S-methyl-5-thio-alpha-D-ribose 1-phosphate: step 1/6. Functionally, catalyzes the interconversion of methylthioribose-1-phosphate (MTR-1-P) into methylthioribulose-1-phosphate (MTRu-1-P). The sequence is that of Methylthioribose-1-phosphate isomerase from Heliobacterium modesticaldum (strain ATCC 51547 / Ice1).